The sequence spans 91 residues: MNQVKYPVLTEKTIRLLEKNQYSFDVNIDSNKTQIKKWIELFFNVKVISVNSHRLPKKKKKIGTTTGYTVRYKRMIIKLQSGYSIPLFSNK.

The protein belongs to the universal ribosomal protein uL23 family. In terms of assembly, part of the 50S ribosomal subunit.

It localises to the plastid. Its subcellular location is the chloroplast. In terms of biological role, binds to 23S rRNA. The protein is Large ribosomal subunit protein uL23c (rpl23) of Marchantia polymorpha (Common liverwort).